Consider the following 421-residue polypeptide: Trimethyllysine dioxygenase, mitochondrial (421 aa).

The N-terminal 15 residues, 1 to 15, are a transit peptide targeting the mitochondrion; sequence MWYHRLSHLHSRLQD. N6-acetyllysine is present on residues K179 and K236. Fe cation is bound by residues H242, D244, and H389.

This sequence belongs to the gamma-BBH/TMLD family. Homodimer. It depends on Fe(2+) as a cofactor. L-ascorbate is required as a cofactor. As to expression, all isoforms, but isoform 8, are widely expressed in adult and fetal tissues. Isoform 8 is restricted to heart and skeletal muscle.

It is found in the mitochondrion matrix. It catalyses the reaction N(6),N(6),N(6)-trimethyl-L-lysine + 2-oxoglutarate + O2 = (3S)-3-hydroxy-N(6),N(6),N(6)-trimethyl-L-lysine + succinate + CO2. It participates in amine and polyamine biosynthesis; carnitine biosynthesis. Its function is as follows. Converts trimethyllysine (TML) into hydroxytrimethyllysine (HTML). This Homo sapiens (Human) protein is Trimethyllysine dioxygenase, mitochondrial (TMLHE).